The sequence spans 704 residues: Phosphoribosylformylglycinamidine synthase subunit PurL (704 aa).

The active site involves His-32. Tyr-35 is an ATP binding site. Residue Glu-76 coordinates Mg(2+). Substrate contacts are provided by residues 77-80 (SHNH) and Arg-99. The Proton acceptor role is filled by His-78. Position 100 (Asp-100) interacts with Mg(2+). Gln-224 is a substrate binding site. Residue Asp-252 participates in Mg(2+) binding. 296–298 (ESQ) serves as a coordination point for substrate. 2 residues coordinate ATP: Asp-471 and Gly-508. Asn-509 is a Mg(2+) binding site. A substrate-binding site is contributed by Ser-511.

Belongs to the FGAMS family. In terms of assembly, monomer. Part of the FGAM synthase complex composed of 1 PurL, 1 PurQ and 2 PurS subunits.

The protein resides in the cytoplasm. The catalysed reaction is N(2)-formyl-N(1)-(5-phospho-beta-D-ribosyl)glycinamide + L-glutamine + ATP + H2O = 2-formamido-N(1)-(5-O-phospho-beta-D-ribosyl)acetamidine + L-glutamate + ADP + phosphate + H(+). It participates in purine metabolism; IMP biosynthesis via de novo pathway; 5-amino-1-(5-phospho-D-ribosyl)imidazole from N(2)-formyl-N(1)-(5-phospho-D-ribosyl)glycinamide: step 1/2. Functionally, part of the phosphoribosylformylglycinamidine synthase complex involved in the purines biosynthetic pathway. Catalyzes the ATP-dependent conversion of formylglycinamide ribonucleotide (FGAR) and glutamine to yield formylglycinamidine ribonucleotide (FGAM) and glutamate. The FGAM synthase complex is composed of three subunits. PurQ produces an ammonia molecule by converting glutamine to glutamate. PurL transfers the ammonia molecule to FGAR to form FGAM in an ATP-dependent manner. PurS interacts with PurQ and PurL and is thought to assist in the transfer of the ammonia molecule from PurQ to PurL. The polypeptide is Phosphoribosylformylglycinamidine synthase subunit PurL (Pyrococcus furiosus (strain ATCC 43587 / DSM 3638 / JCM 8422 / Vc1)).